The following is a 440-amino-acid chain: Chromosome partition protein MukF (440 aa).

The tract at residues 208–236 (LSETSGTLRELQDTLEAAGDKLQANLLRI) is leucine-zipper.

This sequence belongs to the MukF family. As to quaternary structure, interacts, and probably forms a ternary complex, with MukE and MukB via its C-terminal region. The complex formation is stimulated by calcium or magnesium. It is required for an interaction between MukE and MukB.

It localises to the cytoplasm. It is found in the nucleoid. In terms of biological role, involved in chromosome condensation, segregation and cell cycle progression. May participate in facilitating chromosome segregation by condensation DNA from both sides of a centrally located replisome during cell division. Not required for mini-F plasmid partitioning. Probably acts via its interaction with MukB and MukE. Overexpression results in anucleate cells. It has a calcium binding activity. The chain is Chromosome partition protein MukF from Serratia proteamaculans (strain 568).